A 454-amino-acid chain; its full sequence is Carbon catabolite repressor protein 4 homolog 5 (454 aa).

The interval 1 to 76 is disordered; the sequence is MSGYERKNTT…SLRRRRRTKE (76 aa). The segment covering 31–41 has biased composition (basic and acidic residues); that stretch reads VYEKSNRKESI. Residues 61 to 75 are compositionally biased toward basic residues; sequence VRHSKSSLRRRRRTK. E153 is a Mg(2+) binding site.

The protein belongs to the CCR4/nocturin family. As to quaternary structure, component of the CCR4-NOT complex, at least composed of CRR4 and CAF1 proteins. The cofactor is Mg(2+).

The protein localises to the nucleus. The protein resides in the cytoplasm. The catalysed reaction is Exonucleolytic cleavage of poly(A) to 5'-AMP.. In terms of biological role, acts as a catalytic component of the CCR4-NOT core complex, which in the nucleus seems to be a general transcription factor, and in the cytoplasm the major mRNA deadenylase involved in mRNA turnover. This chain is Carbon catabolite repressor protein 4 homolog 5 (CCR4-5), found in Arabidopsis thaliana (Mouse-ear cress).